We begin with the raw amino-acid sequence, 678 residues long: Elongation factor G 2 (678 aa).

The tr-type G domain occupies 4-278; sequence QKLRNIGIIA…AVVDYLPSPQ (275 aa). GTP-binding positions include 13–20, 77–81, and 131–134; these read AHVDAGKT, DTPGH, and NKMD.

The protein belongs to the TRAFAC class translation factor GTPase superfamily. Classic translation factor GTPase family. EF-G/EF-2 subfamily.

It is found in the cytoplasm. Functionally, catalyzes the GTP-dependent ribosomal translocation step during translation elongation. During this step, the ribosome changes from the pre-translocational (PRE) to the post-translocational (POST) state as the newly formed A-site-bound peptidyl-tRNA and P-site-bound deacylated tRNA move to the P and E sites, respectively. Catalyzes the coordinated movement of the two tRNA molecules, the mRNA and conformational changes in the ribosome. This chain is Elongation factor G 2, found in Hahella chejuensis (strain KCTC 2396).